The following is a 603-amino-acid chain: Methylenetetrahydrofolate reductase 1 (603 aa).

Glutamate 21 serves as the catalytic Proton donor/acceptor. NAD(+) contacts are provided by residues 21–26 and 53–54; these read EFFPPK and TW. FAD is bound by residues 53 to 54, histidine 82, 112 to 114, 130 to 131, tyrosine 153, and lysine 173; these read TW, RGD, and YA. Aspartate 114 lines the substrate pocket. Residues glutamine 184 and tyrosine 276 each contribute to the substrate site. Serine 355 is modified (phosphoserine).

This sequence belongs to the methylenetetrahydrofolate reductase family. FAD is required as a cofactor.

The enzyme catalyses (6S)-5-methyl-5,6,7,8-tetrahydrofolate + NADP(+) = (6R)-5,10-methylene-5,6,7,8-tetrahydrofolate + NADPH + H(+). It catalyses the reaction (6S)-5-methyl-5,6,7,8-tetrahydrofolate + NAD(+) = (6R)-5,10-methylene-5,6,7,8-tetrahydrofolate + NADH + H(+). The protein operates within one-carbon metabolism; tetrahydrofolate interconversion. In terms of biological role, major methylenetetrahydrofolate reductase required to generate the methyl groups necessary for methionine synthetase to convert homocysteine to methionine. Performs 80 to 85 percent of the total methylenetetrahydrofolate reductase activity of the cells. This is Methylenetetrahydrofolate reductase 1 (met9) from Schizosaccharomyces pombe (strain 972 / ATCC 24843) (Fission yeast).